A 103-amino-acid chain; its full sequence is Large ribosomal subunit protein uL24 (103 aa).

This sequence belongs to the universal ribosomal protein uL24 family. As to quaternary structure, part of the 50S ribosomal subunit.

In terms of biological role, one of two assembly initiator proteins, it binds directly to the 5'-end of the 23S rRNA, where it nucleates assembly of the 50S subunit. One of the proteins that surrounds the polypeptide exit tunnel on the outside of the subunit. This Listeria innocua serovar 6a (strain ATCC BAA-680 / CLIP 11262) protein is Large ribosomal subunit protein uL24.